The sequence spans 217 residues: Endo-1,4-beta-xylanase (217 aa).

Positions 1-17 (MQFLIPVVILCVSLVDS) are cleaved as a signal peptide. The region spanning 20 to 217 (VLYNNEIGFN…SSGFADITVS (198 aa)) is the GH11 domain. Asparagine 56 and asparagine 80 each carry an N-linked (GlcNAc...) asparagine glycan. The active-site Nucleophile is the glutamate 107. Glutamate 204 (proton donor) is an active-site residue.

This sequence belongs to the glycosyl hydrolase 11 (cellulase G) family. In terms of tissue distribution, expressed in larval carcasses and gut, and adult gut.

Its subcellular location is the secreted. The enzyme catalyses Endohydrolysis of (1-&gt;4)-beta-D-xylosidic linkages in xylans.. It participates in glycan degradation; xylan degradation. The protein is Endo-1,4-beta-xylanase of Phaedon cochleariae (Mustard beetle).